The following is a 358-amino-acid chain: Bi-functional coumaroyl CoA and feruloyl CoA ortho-hydroxylase F6H2-2-1 (358 aa).

The region spanning 200-308 is the Fe2OG dioxygenase domain; it reads SKESLLMGSR…RISVPVFVNP (109 aa). Tyr216 lines the 2-oxoglutarate pocket. Residues His231, Asp233, and His289 each contribute to the Fe cation site. 2-oxoglutarate contacts are provided by Arg299 and Ser301.

This sequence belongs to the iron/ascorbate-dependent oxidoreductase family. Requires L-ascorbate as cofactor. The cofactor is Fe(2+). As to expression, mostly expressed in underground stems and stems.

It catalyses the reaction (E)-4-coumaroyl-CoA + 2-oxoglutarate + O2 = (E)-2,4-dihydroxycinnamoyl-CoA + succinate + CO2. The enzyme catalyses (E)-feruloyl-CoA + 2-oxoglutarate + O2 = (E)-6-hydroxyferuloyl-CoA + succinate + CO2. The protein operates within phenylpropanoid metabolism. In terms of biological role, 2-oxoglutarate (OG)- and Fe(II)-dependent dioxygenase (2OGD) involved in scopoletin and umbelliferone biosynthesis. Converts feruloyl CoA into 6'-hydroxyferuloyl CoA, and p-coumaroyl CoA into 2,4-dihydroxycinnamoyl-CoA, but has no activity toward caffeoyl-CoA. The protein is Bi-functional coumaroyl CoA and feruloyl CoA ortho-hydroxylase F6H2-2-1 of Ipomoea batatas (Sweet potato).